The following is a 63-amino-acid chain: Protein DsrB (63 aa).

This sequence belongs to the DsrB family.

This Yersinia pseudotuberculosis serotype O:1b (strain IP 31758) protein is Protein DsrB.